Consider the following 138-residue polypeptide: ATP synthase epsilon chain (138 aa).

It belongs to the ATPase epsilon chain family. In terms of assembly, F-type ATPases have 2 components, CF(1) - the catalytic core - and CF(0) - the membrane proton channel. CF(1) has five subunits: alpha(3), beta(3), gamma(1), delta(1), epsilon(1). CF(0) has three main subunits: a, b and c.

It is found in the cell membrane. In terms of biological role, produces ATP from ADP in the presence of a proton gradient across the membrane. The chain is ATP synthase epsilon chain from Caldanaerobacter subterraneus subsp. tengcongensis (strain DSM 15242 / JCM 11007 / NBRC 100824 / MB4) (Thermoanaerobacter tengcongensis).